Here is a 247-residue protein sequence, read N- to C-terminus: uncharacterized protein (247 aa).

The interval 225–247 (LASAPVPPSGSGNSGHRRANLGL) is disordered.

This is an uncharacterized protein from Methanocaldococcus jannaschii (strain ATCC 43067 / DSM 2661 / JAL-1 / JCM 10045 / NBRC 100440) (Methanococcus jannaschii).